A 520-amino-acid chain; its full sequence is Glucose starvation modulator protein 1 (520 aa).

Residues 20–48 constitute a DNA-binding region (zn(2)-C6 fungal-type); it reads CVFCHEKHLQCSNERPCKNCVKRGLAHEC. The PAS domain occupies 376–445; that stretch reads DYEKLSQLNS…FRLFKTVAVG (70 aa).

The protein belongs to the ERT1/acuK family.

The protein resides in the nucleus. Functionally, transcription factor which regulates nonfermentable carbon utilization. This chain is Glucose starvation modulator protein 1 (GSM1), found in Scheffersomyces stipitis (strain ATCC 58785 / CBS 6054 / NBRC 10063 / NRRL Y-11545) (Yeast).